The following is a 155-amino-acid chain: 6,7-dimethyl-8-ribityllumazine synthase (155 aa).

5-amino-6-(D-ribitylamino)uracil is bound by residues tyrosine 23, 57-59 (AWE), and 81-83 (CVI). 86 to 87 (ET) is a binding site for (2S)-2-hydroxy-3-oxobutyl phosphate. The active-site Proton donor is histidine 89. Residue phenylalanine 114 coordinates 5-amino-6-(D-ribitylamino)uracil. Arginine 128 lines the (2S)-2-hydroxy-3-oxobutyl phosphate pocket.

The protein belongs to the DMRL synthase family.

It carries out the reaction (2S)-2-hydroxy-3-oxobutyl phosphate + 5-amino-6-(D-ribitylamino)uracil = 6,7-dimethyl-8-(1-D-ribityl)lumazine + phosphate + 2 H2O + H(+). The protein operates within cofactor biosynthesis; riboflavin biosynthesis; riboflavin from 2-hydroxy-3-oxobutyl phosphate and 5-amino-6-(D-ribitylamino)uracil: step 1/2. Catalyzes the formation of 6,7-dimethyl-8-ribityllumazine by condensation of 5-amino-6-(D-ribitylamino)uracil with 3,4-dihydroxy-2-butanone 4-phosphate. This is the penultimate step in the biosynthesis of riboflavin. This chain is 6,7-dimethyl-8-ribityllumazine synthase, found in Rhodopirellula baltica (strain DSM 10527 / NCIMB 13988 / SH1).